A 162-amino-acid polypeptide reads, in one-letter code: Glycine cleavage system H protein, mitochondrial (162 aa).

A mitochondrion-targeting transit peptide spans 1–31 (MALRIWASSTANALRLSSATRPHFSPLSRCF). A Lipoyl-binding domain is found at 53–135 (VATIGITDHA…YEDGWMIKVK (83 aa)). Lysine 94 is modified (N6-lipoyllysine).

It belongs to the GcvH family. As to quaternary structure, the glycine cleavage system is composed of four proteins: P, T, L and H. (R)-lipoate is required as a cofactor.

It is found in the mitochondrion. Functionally, the glycine cleavage system catalyzes the degradation of glycine. The H protein shuttles the methylamine group of glycine from the P protein to the T protein. The sequence is that of Glycine cleavage system H protein, mitochondrial (GDCSH) from Flaveria pringlei.